A 332-amino-acid polypeptide reads, in one-letter code: Anthranilate phosphoribosyltransferase (332 aa).

5-phospho-alpha-D-ribose 1-diphosphate is bound by residues Gly79, 82-83 (GD), Ser87, 89-92 (NIST), 107-115 (KHGNRSVSS), and Ser119. Gly79 serves as a coordination point for anthranilate. Position 91 (Ser91) interacts with Mg(2+). Asn110 lines the anthranilate pocket. Residue Arg165 coordinates anthranilate. The Mg(2+) site is built by Asp223 and Glu224.

It belongs to the anthranilate phosphoribosyltransferase family. In terms of assembly, homodimer. The cofactor is Mg(2+).

The catalysed reaction is N-(5-phospho-beta-D-ribosyl)anthranilate + diphosphate = 5-phospho-alpha-D-ribose 1-diphosphate + anthranilate. It participates in amino-acid biosynthesis; L-tryptophan biosynthesis; L-tryptophan from chorismate: step 2/5. Catalyzes the transfer of the phosphoribosyl group of 5-phosphorylribose-1-pyrophosphate (PRPP) to anthranilate to yield N-(5'-phosphoribosyl)-anthranilate (PRA). This is Anthranilate phosphoribosyltransferase from Yersinia pestis bv. Antiqua (strain Antiqua).